Consider the following 317-residue polypeptide: Probable deoxyhypusine synthase 1 (317 aa).

Residue lysine 285 is the Nucleophile of the active site.

This sequence belongs to the deoxyhypusine synthase family. The cofactor is NAD(+).

The enzyme catalyses [eIF5A protein]-L-lysine + spermidine = [eIF5A protein]-deoxyhypusine + propane-1,3-diamine. Its pathway is protein modification; eIF5A hypusination. Its function is as follows. Catalyzes the NAD-dependent oxidative cleavage of spermidine and the subsequent transfer of the butylamine moiety of spermidine to the epsilon-amino group of a specific lysine residue of the eIF-5A precursor protein to form the intermediate deoxyhypusine residue. The polypeptide is Probable deoxyhypusine synthase 1 (dys1) (Methanosarcina mazei (strain ATCC BAA-159 / DSM 3647 / Goe1 / Go1 / JCM 11833 / OCM 88) (Methanosarcina frisia)).